The sequence spans 154 residues: SsrA-binding protein (154 aa).

This sequence belongs to the SmpB family.

Its subcellular location is the cytoplasm. In terms of biological role, required for rescue of stalled ribosomes mediated by trans-translation. Binds to transfer-messenger RNA (tmRNA), required for stable association of tmRNA with ribosomes. tmRNA and SmpB together mimic tRNA shape, replacing the anticodon stem-loop with SmpB. tmRNA is encoded by the ssrA gene; the 2 termini fold to resemble tRNA(Ala) and it encodes a 'tag peptide', a short internal open reading frame. During trans-translation Ala-aminoacylated tmRNA acts like a tRNA, entering the A-site of stalled ribosomes, displacing the stalled mRNA. The ribosome then switches to translate the ORF on the tmRNA; the nascent peptide is terminated with the 'tag peptide' encoded by the tmRNA and targeted for degradation. The ribosome is freed to recommence translation, which seems to be the essential function of trans-translation. The protein is SsrA-binding protein of Lachnoclostridium phytofermentans (strain ATCC 700394 / DSM 18823 / ISDg) (Clostridium phytofermentans).